The chain runs to 318 residues: 2-dehydro-3-deoxygalactonokinase (318 aa).

Substrate is bound by residues 35–39 (GAESN), Tyr90, 105–107 (YDR), and Arg169. ATP-binding positions include 167–169 (NYR), 228–233 (TRGEDG), and 257–260 (GTGD). Residues Asp260 and Asp296 each contribute to the substrate site. Catalysis depends on Asp260, which acts as the Proton acceptor.

Belongs to the carbohydrate kinase PfkB family. As to quaternary structure, homohexamer.

It catalyses the reaction 2-dehydro-3-deoxy-D-galactonate + ATP = 2-dehydro-3-deoxy-6-phospho-D-galactonate + ADP + H(+). In terms of biological role, involved in galactose catabolism. Catalyzes the phosphorylation of 2-keto-3-deoxygalactonate (KDGal) to produce 2-keto-3-deoxy-6-phosphogalactonate (KDPGal). Can also phosphorylate 2-keto-3-deoxygluconate (KDG) to 2-keto-3-deoxy-6-phosphogluconate (KDPG), but the catalytic efficiency for KDGal is 50-fold higher than for KDG. This is 2-dehydro-3-deoxygalactonokinase from Haloferax volcanii (strain ATCC 29605 / DSM 3757 / JCM 8879 / NBRC 14742 / NCIMB 2012 / VKM B-1768 / DS2) (Halobacterium volcanii).